The following is a 485-amino-acid chain: Probable cytosol aminopeptidase (485 aa).

K251 and D256 together coordinate Mn(2+). K263 is an active-site residue. Mn(2+) is bound by residues D274, D333, and E335. R337 is an active-site residue.

This sequence belongs to the peptidase M17 family. Requires Mn(2+) as cofactor.

It is found in the cytoplasm. The enzyme catalyses Release of an N-terminal amino acid, Xaa-|-Yaa-, in which Xaa is preferably Leu, but may be other amino acids including Pro although not Arg or Lys, and Yaa may be Pro. Amino acid amides and methyl esters are also readily hydrolyzed, but rates on arylamides are exceedingly low.. It carries out the reaction Release of an N-terminal amino acid, preferentially leucine, but not glutamic or aspartic acids.. Functionally, presumably involved in the processing and regular turnover of intracellular proteins. Catalyzes the removal of unsubstituted N-terminal amino acids from various peptides. This chain is Probable cytosol aminopeptidase, found in Brucella melitensis biotype 1 (strain ATCC 23456 / CCUG 17765 / NCTC 10094 / 16M).